A 101-amino-acid chain; its full sequence is uncharacterized protein (101 aa).

This is an uncharacterized protein from Enterobacteria phage T3 (Bacteriophage T3).